The following is a 47-amino-acid chain: uncharacterized protein (47 aa).

This is an uncharacterized protein from Treponema pallidum (strain Nichols).